The sequence spans 350 residues: Heat-inducible transcription repressor HrcA (350 aa).

This sequence belongs to the HrcA family.

In terms of biological role, negative regulator of class I heat shock genes (grpE-dnaK-dnaJ and groELS operons). Prevents heat-shock induction of these operons. The protein is Heat-inducible transcription repressor HrcA of Limosilactobacillus reuteri (strain DSM 20016) (Lactobacillus reuteri).